We begin with the raw amino-acid sequence, 1013 residues long: GPI ethanolamine phosphate transferase 3 (1013 aa).

A helical transmembrane segment spans residues 41–61 (TLYIFLYSALAALQFIAIAFF). N-linked (GlcNAc...) asparagine glycosylation is found at Asn184, Asn205, Asn336, Asn399, and Asn423. Helical transmembrane passes span 447–467 (YYSIGTGIILLIISLAMLITI), 484–504 (VPTIIVMPLVSNVCFLGVFYV), and 515–535 (LWASLLATAVGIIIGFYVPIF). An N-linked (GlcNAc...) asparagine glycan is attached at Asn539. A run of 4 helical transmembrane segments spans residues 558–578 (VAAFLITLHALIFTSNSFTIW), 582–602 (IVSFSLTTLGMLTLYEFVFLP), 643–663 (IVGGYHSIVLIVCTRLASLIT), and 682–702 (NYSFSVMLGCLFLVFATPACI). Asn707 is a glycosylation site (N-linked (GlcNAc...) asparagine). A helical transmembrane segment spans residues 715–735 (AAPIWIGMLMKSILFVNFIYW). N-linked (GlcNAc...) asparagine glycosylation is found at Asn742, Asn750, and Asn755. Transmembrane regions (helical) follow at residues 761–781 (IVVGVSLVAANIGWMMGPLCI), 802–822 (NAYGAQYFLLVINFFMCILLF), 825–845 (PLAQLSLFLMCNQLLSILEIF), 868–888 (FFSTGHQATIPAVQWDMGFIL), 899–919 (LGIVLNTFGPHILCGISVALL), 943–963 (GMLLIYQTVLCLSTFIWVTNF), and 977–997 (FMFAALSLIVTQLVLTFITIA).

This sequence belongs to the PIGG/PIGN/PIGO family. PIGO subfamily.

Its subcellular location is the endoplasmic reticulum membrane. It functions in the pathway glycolipid biosynthesis; glycosylphosphatidylinositol-anchor biosynthesis. In terms of biological role, involved in glycosylphosphatidylinositol-anchor biosynthesis. Transfers ethanolamine phosphate to the GPI third mannose which links the GPI-anchor to the C-terminus of the proteins by an amide bond. Involved in cell wall biosynthesis. In Eremothecium gossypii (strain ATCC 10895 / CBS 109.51 / FGSC 9923 / NRRL Y-1056) (Yeast), this protein is GPI ethanolamine phosphate transferase 3 (GPI13).